Here is a 190-residue protein sequence, read N- to C-terminus: Large ribosomal subunit protein bL9 (190 aa).

It belongs to the bacterial ribosomal protein bL9 family.

In terms of biological role, binds to the 23S rRNA. This is Large ribosomal subunit protein bL9 from Methylobacterium radiotolerans (strain ATCC 27329 / DSM 1819 / JCM 2831 / NBRC 15690 / NCIMB 10815 / 0-1).